A 193-amino-acid chain; its full sequence is Ion-translocating oxidoreductase complex subunit A (193 aa).

A run of 6 helical transmembrane segments spans residues 5 to 25 (LMLLLGTALVNNVVLVKFLGL), 39 to 59 (IGMGMATTFVLTLASALTWLI), 62 to 82 (FLLVPFDFGYLRILSFILVIA), 102 to 122 (VLGIYLPLITTNCAVLGVALL), 134 to 154 (VLYGFGSALGFTMVMVLFAGL), and 170 to 190 (APISFITAGLLSLAFMGFAGL).

It belongs to the NqrDE/RnfAE family. In terms of assembly, the complex is composed of six subunits: RnfA, RnfB, RnfC, RnfD, RnfE and RnfG.

The protein resides in the cell inner membrane. Functionally, part of a membrane-bound complex that couples electron transfer with translocation of ions across the membrane. The protein is Ion-translocating oxidoreductase complex subunit A of Azoarcus sp. (strain BH72).